Reading from the N-terminus, the 129-residue chain is Small ribosomal subunit protein uS9 (129 aa).

The interval 98–129 (KAQGFLTRDPRKKERKKYGRKKARKSFQFSKR) is disordered. Residues 110-129 (KERKKYGRKKARKSFQFSKR) show a composition bias toward basic residues.

The protein belongs to the universal ribosomal protein uS9 family.

The chain is Small ribosomal subunit protein uS9 from Chlamydia trachomatis serovar L2 (strain ATCC VR-902B / DSM 19102 / 434/Bu).